The following is a 23-amino-acid chain: Coenzyme PQQ synthesis protein A (23 aa).

The segment at residues 15-19 (EVTLY) is a cross-link (pyrroloquinoline quinone (Glu-Tyr)).

This sequence belongs to the PqqA family.

It participates in cofactor biosynthesis; pyrroloquinoline quinone biosynthesis. Functionally, required for coenzyme pyrroloquinoline quinone (PQQ) biosynthesis. PQQ is probably formed by cross-linking a specific glutamate to a specific tyrosine residue and excising these residues from the peptide. The polypeptide is Coenzyme PQQ synthesis protein A (Klebsiella pneumoniae (strain 342)).